Here is a 115-residue protein sequence, read N- to C-terminus: Skin calcitonin gene-related peptide (115 aa).

Positions 1-25 (MVLLKISSLLAVLGLLVCQMYSSQA) are cleaved as a signal peptide. Positions 26–69 (APARRALEPLPDRVTEAHRLLRALIRELTAEDMEASSSGAAHKR) are cleaved as a propeptide — removed in mature form by a carboxypeptidase. C71 and C76 are disulfide-bonded. Residue F106 is modified to Phenylalanine amide. A propeptide spans 107 to 115 (GRRRRSLHV) (removed in mature form by an endoprotease).

In terms of tissue distribution, skin, intestine and brain.

It is found in the secreted. Functionally, CGRP induces vasodilation. It dilates a variety of vessels including the coronary, cerebral and systemic vasculature. Its abundance in the CNS also points toward a neurotransmitter or neuromodulator role. The protein is Skin calcitonin gene-related peptide of Phyllomedusa bicolor (Two-colored leaf frog).